Reading from the N-terminus, the 355-residue chain is MLDRLEGVEQRFLEVESLLSDPKIVGDQKVYQKYVREHADLSKVVEAYREYKQVLEGLEESKELLKDPDPDIKDLAKEEIDRLDKEQVRLEDELKILLLPKDPNDDKNVILEIRAGTGGDEAGLFAADLFRMYSRYAETRGWKVETLSEHLTGVGGIKEIAAMITGQGVYSAFKFESGTHRVQRVPVTEAQGRIHTSACTVAVLPEAEEVDIQIDPSEIRVDVYRSQGAGGQHVNTTDSAVRLTHLPTGVVVTCQDEKSQHKNKAKAMKVLRARLLDHAVQEQNASISAERKSQVGSGDRSERIRTYNYPQGRVTDHRIGLTLYKLESIMAGQISEIVDALTTHYNAEALQEGGL.

Glutamine 232 carries the N5-methylglutamine modification. The interval 282-309 (EQNASISAERKSQVGSGDRSERIRTYNY) is disordered. Residues 289–305 (AERKSQVGSGDRSERIR) show a composition bias toward basic and acidic residues.

This sequence belongs to the prokaryotic/mitochondrial release factor family. In terms of processing, methylated by PrmC. Methylation increases the termination efficiency of RF1.

Its subcellular location is the cytoplasm. Peptide chain release factor 1 directs the termination of translation in response to the peptide chain termination codons UAG and UAA. The protein is Peptide chain release factor 1 of Desulfatibacillum aliphaticivorans.